Reading from the N-terminus, the 72-residue chain is Translation initiation factor IF-1 (72 aa).

Residues 1 to 72 (MSKDDVIEID…DKGRITYRYK (72 aa)) enclose the S1-like domain.

Belongs to the IF-1 family. Component of the 30S ribosomal translation pre-initiation complex which assembles on the 30S ribosome in the order IF-2 and IF-3, IF-1 and N-formylmethionyl-tRNA(fMet); mRNA recruitment can occur at any time during PIC assembly.

It localises to the cytoplasm. One of the essential components for the initiation of protein synthesis. Stabilizes the binding of IF-2 and IF-3 on the 30S subunit to which N-formylmethionyl-tRNA(fMet) subsequently binds. Helps modulate mRNA selection, yielding the 30S pre-initiation complex (PIC). Upon addition of the 50S ribosomal subunit IF-1, IF-2 and IF-3 are released leaving the mature 70S translation initiation complex. In Campylobacter hominis (strain ATCC BAA-381 / DSM 21671 / CCUG 45161 / LMG 19568 / NCTC 13146 / CH001A), this protein is Translation initiation factor IF-1.